The following is a 343-amino-acid chain: NADH-quinone oxidoreductase subunit H (343 aa).

Helical transmembrane passes span 19 to 39, 89 to 109, 124 to 144, 158 to 178, 198 to 218, 257 to 277, 279 to 299, and 314 to 334; these read VAWTLVKIMALVVPLMLGVAY, ALFILGPILAIAPALAAWAVI, LLYVMAITSMGVYGVIIAGWA, AAQIVSYEIAMGFALVGVLMA, WYLWPLFPLFVVYLVAGVAET, ILVAALTTLMFLGGWLSPVAF, PDGIVWWLLKTGFVLFLFLWF, and LGWKVFIPITIVWIVFVGGMM.

It belongs to the complex I subunit 1 family. In terms of assembly, NDH-1 is composed of 14 different subunits. Subunits NuoA, H, J, K, L, M, N constitute the membrane sector of the complex.

The protein resides in the cell inner membrane. The catalysed reaction is a quinone + NADH + 5 H(+)(in) = a quinol + NAD(+) + 4 H(+)(out). NDH-1 shuttles electrons from NADH, via FMN and iron-sulfur (Fe-S) centers, to quinones in the respiratory chain. The immediate electron acceptor for the enzyme in this species is believed to be ubiquinone. Couples the redox reaction to proton translocation (for every two electrons transferred, four hydrogen ions are translocated across the cytoplasmic membrane), and thus conserves the redox energy in a proton gradient. This subunit may bind ubiquinone. This chain is NADH-quinone oxidoreductase subunit H, found in Thiobacillus denitrificans (strain ATCC 25259 / T1).